Here is a 34-residue protein sequence, read N- to C-terminus: Ornithine carbamoyltransferase, catabolic (34 aa).

This sequence belongs to the aspartate/ornithine carbamoyltransferase superfamily. OTCase family. Probably nonameric or dodecameric.

The protein resides in the cytoplasm. The enzyme catalyses carbamoyl phosphate + L-ornithine = L-citrulline + phosphate + H(+). It functions in the pathway amino-acid degradation; L-arginine degradation via ADI pathway; carbamoyl phosphate from L-arginine: step 2/2. The polypeptide is Ornithine carbamoyltransferase, catabolic (arcB) (Pseudomonas putida (Arthrobacter siderocapsulatus)).